Here is a 1068-residue protein sequence, read N- to C-terminus: tRNA wybutosine-synthesizing protein 4 (1068 aa).

A disordered region spans residues 1–31 (MCPPEQPAKAMAPSKSNQAAKSAVPTKEEKS). Residues Arg81, Gly107, Asp134, 181–182 (DL), and Glu208 contribute to the S-adenosyl-L-methionine site. The JmjC domain maps to 876 to 1024 (ADFPSLSSDF…ALGRDVYGNR (149 aa)).

The protein belongs to the methyltransferase superfamily. LCMT family.

It carries out the reaction 7-[(3S)-3-amino-3-carboxypropyl]wyosine(37) in tRNA(Phe) + S-adenosyl-L-methionine = 7-[(3S)-(3-amino-3-methoxycarbonyl)propyl]wyosine(37) in tRNA(Phe) + S-adenosyl-L-homocysteine. The enzyme catalyses 7-[(3S)-(3-amino-3-methoxycarbonyl)propyl]wyosine(37) in tRNA(Phe) + S-adenosyl-L-methionine + CO2 = wybutosine(37) in tRNA(Phe) + S-adenosyl-L-homocysteine + 2 H(+). Its pathway is tRNA modification; wybutosine-tRNA(Phe) biosynthesis. Probable S-adenosyl-L-methionine-dependent methyltransferase that acts as a component of the wybutosine biosynthesis pathway. Wybutosine is a hyper modified guanosine with a tricyclic base found at the 3'-position adjacent to the anticodon of eukaryotic phenylalanine tRNA. May methylate the carboxyl group of leucine residues to form alpha-leucine ester residues. The protein is tRNA wybutosine-synthesizing protein 4 (ppm2) of Emericella nidulans (strain FGSC A4 / ATCC 38163 / CBS 112.46 / NRRL 194 / M139) (Aspergillus nidulans).